The primary structure comprises 88 residues: Small ribosomal subunit protein uS15c (88 aa).

Belongs to the universal ribosomal protein uS15 family. In terms of assembly, part of the 30S ribosomal subunit.

It localises to the plastid. Its subcellular location is the chloroplast. In Marchantia polymorpha (Common liverwort), this protein is Small ribosomal subunit protein uS15c (rps15).